We begin with the raw amino-acid sequence, 644 residues long: Macrolide export ATP-binding/permease protein MacB (644 aa).

The ABC transporter domain maps to 4–242; sequence IECKNINRYF…SNVGRIQEKA (239 aa). 40–47 contributes to the ATP binding site; sequence GQSGSGKS. The next 4 membrane-spanning stretches (helical) occupy residues 270–290, 524–544, 574–594, and 607–627; these read LLTM…VALG, IALI…LVSV, LICI…SLVF, and AASV…FGFM.

It belongs to the ABC transporter superfamily. Macrolide exporter (TC 3.A.1.122) family. Homodimer.

Its subcellular location is the cell inner membrane. Its function is as follows. Non-canonical ABC transporter that contains transmembrane domains (TMD), which form a pore in the inner membrane, and an ATP-binding domain (NBD), which is responsible for energy generation. Overexpression confers resistance against macrolides. The polypeptide is Macrolide export ATP-binding/permease protein MacB (Neisseria gonorrhoeae).